We begin with the raw amino-acid sequence, 177 residues long: Large ribosomal subunit protein uL6 (177 aa).

Belongs to the universal ribosomal protein uL6 family. In terms of assembly, part of the 50S ribosomal subunit.

In terms of biological role, this protein binds to the 23S rRNA, and is important in its secondary structure. It is located near the subunit interface in the base of the L7/L12 stalk, and near the tRNA binding site of the peptidyltransferase center. This is Large ribosomal subunit protein uL6 from Bartonella quintana (strain Toulouse) (Rochalimaea quintana).